The following is a 122-amino-acid chain: MIQQESRLKVADNSGARELLVIKVLGGSRVKFGYIGDIIVATVKQATPGGVVKKGDVVKAVVVRTKQGAHRADGSYIKFDENAAVLIKDDKSPQGTRIFGPVARELRDKDYMKIVSLAPEVL.

It belongs to the universal ribosomal protein uL14 family. In terms of assembly, part of the 50S ribosomal subunit. Forms a cluster with proteins L3 and L19. In the 70S ribosome, L14 and L19 interact and together make contacts with the 16S rRNA in bridges B5 and B8.

Functionally, binds to 23S rRNA. Forms part of two intersubunit bridges in the 70S ribosome. In Pediococcus pentosaceus (strain ATCC 25745 / CCUG 21536 / LMG 10740 / 183-1w), this protein is Large ribosomal subunit protein uL14.